Here is a 234-residue protein sequence, read N- to C-terminus: Small ribosomal subunit protein uS3 (234 aa).

The KH type-2 domain maps to 39-109 (IRTLINKHYG…EVRIAIYEVK (71 aa)).

The protein belongs to the universal ribosomal protein uS3 family. Part of the 30S ribosomal subunit. Forms a tight complex with proteins S10 and S14.

Binds the lower part of the 30S subunit head. Binds mRNA in the 70S ribosome, positioning it for translation. In Coprothermobacter proteolyticus (strain ATCC 35245 / DSM 5265 / OCM 4 / BT), this protein is Small ribosomal subunit protein uS3.